The chain runs to 26 residues: Somatostatin-1 (26 aa).

A disulfide bridge connects residues Cys15 and Cys26.

Belongs to the somatostatin family.

Its subcellular location is the secreted. In terms of biological role, somatostatin inhibits the release of somatotropin. This Amia calva (Bowfin) protein is Somatostatin-1 (sst1).